A 157-amino-acid polypeptide reads, in one-letter code: MHSNVKKVTDKDVIKPVGIPFVVYFSSISNNTHRFIQKLEIENIRIPYELDQSISVNRDYVLVTPTYSGGGEYVEGAVPKQVIKFLNNKENRSFCRGVISSGNTNFGDTFGIAGPIISKKLNVPFLYQFELLGTQHDVSQIKQILFRFWEDGNNERK.

Belongs to the NrdI family.

In terms of biological role, probably involved in ribonucleotide reductase function. This is Protein NrdI from Mycoplasma mycoides subsp. mycoides SC (strain CCUG 32753 / NCTC 10114 / PG1).